The following is a 1102-amino-acid chain: MPQSQVATASPSQNAQPNHGMGSKVLSSDPNASLPPQTAYYASPLHANSVSLPPSHLPRSTLHPLLSQQQQPAQQSPSLGPAQQNIQQPPSVSIASQPHYAEAIVPIQQVLQPQQYRQLPPNMVAATNAPQQHPQLQRMMPILSSNQPIQQLPLPNQASPYIPVPLQQQQQSQPQQQPQQQQHQQPQQPQPPQQPLQQQQQQRQLHSGIQQPVSTIVSQNGTYYSIPAVNHPMAGQPIAIAPVPAPNQAALPPIPPQALPANGTPNTLASPVTLPAANSAVQNAQPVPMTSSPAMAVVPQNKTAATSTLAAQQGANVLPPNAPESVRHLISLNEETWIQIGRLAELFDDQDKALSAYESALRQNPYSIPAMLQIATILRNREQFPLAIEYYQTILDCDPKQGEIWSALGHCYLMQDDLSRAYSAYRQALYHLKDPKDPKLWYGIGILYDRYGSHEHAEEAFMQCLRMDPNFEKVNEIYFRLGIIYKQQHKFAQSLELFRHILDNPPKPLTVLDIYFQIGHVYEQRKEYKLAKEAYERVLAETPNHAKVLQQLGWLCHQQSSSFTNQDLAIQYLTKSLEADDTDAQSWYLIGRCYVAQQKYNKAYEAYQQAVYRDGRNPTFWCSIGVLYYQINQYQDALDAYSRAIRLNPYISEVWYDLGTLYESCHNQISDALDAYQRAAELDPTNPHIKARLQLLRGPNNEQHKIVNAPPSNVPNVQTAKYINQPGVPYSNVPVAQLSGNWQPPHLPQAQLPSATGQSGVVQQPYQTQPSVTNNNVATQPVIASTVPVQTAAPSSQTAVPQTIHQSNAFTPRGKHASGSRNSISSTKSPQHKLSDQPRSRNNSISNVSHRERSNSVSSKSRETRTSASNESDPKKSTQRDSSKKLENSTVVSGSPSSSSKSDAAKSIKPQKPEPALKPVEGTADPKSTKRNHQETEKTADTDVSSTEPVKRQKTADVNDDVGEEEVKQSVSEQVDSAQLTSEPKSESLPKSPEEKSDDTSNDVTTENTNDINGDSNMDNVATVDKSTDAVDTSTATVAATTTTAEEELPQKESQERSSPSPENQDSTPLAPKSVSPKQAARTLDIDENYDDDEGEKETVSV.

2 stretches are compositionally biased toward polar residues: residues 1 to 17 (MPQS…NAQP) and 25 to 36 (VLSSDPNASLPP). Disordered regions lie at residues 1-94 (MPQS…SVSI) and 166-209 (LQQQ…HSGI). Low complexity predominate over residues 64–84 (PLLSQQQQPAQQSPSLGPAQQ). Positions 85–94 (NIQQPPSVSI) are enriched in polar residues. 2 stretches are compositionally biased toward low complexity: residues 166–187 (LQQQ…QQPQ) and 195–205 (PLQQQQQQRQL). TPR repeat units lie at residues 334 to 367 (EETW…NPYS), 368 to 401 (IPAM…DPKQ), 402 to 435 (GEIW…LKDP), 438 to 471 (PKLW…DPNF), 475 to 508 (NEIY…PPKP), 512 to 545 (LDIY…TPNH), 584 to 617 (AQSW…DGRN), 618 to 651 (PTFW…NPYI), and 652 to 686 (SEVW…DPTN). Disordered stretches follow at residues 739–764 (SGNW…VVQQ) and 808–1102 (NAFT…TVSV). Polar residues-rich tracts occupy residues 751–764 (QLPS…VVQQ) and 819–829 (GSRNSISSTKS). Composition is skewed to basic and acidic residues over residues 849-865 (SHRE…RETR) and 872-887 (SDPK…KKLE). Low complexity predominate over residues 889 to 907 (STVVSGSPSSSSKSDAAKS). 4 positions are modified to phosphoserine: Ser893, Ser895, Ser897, and Ser898. 2 stretches are compositionally biased toward basic and acidic residues: residues 932–941 (NHQETEKTAD) and 984–999 (PKSE…KSDD). Phosphoserine is present on Ser992. The span at 1002-1020 (NDVTTENTNDINGDSNMDN) shows a compositional bias: polar residues. Low complexity predominate over residues 1021–1044 (VATVDKSTDAVDTSTATVAATTTT). Positions 1057-1068 (RSSPSPENQDST) are enriched in polar residues. Phosphoserine occurs at positions 1059 and 1061. The span at 1086 to 1096 (IDENYDDDEGE) shows a compositional bias: acidic residues.

Belongs to the CYC8/SSN6 family. Associates independently with tup11 and tup12 to form ssn6-tup corepressor complexes.

The protein resides in the cytoplasm. It localises to the nucleus. Functionally, acts as a component of the ssn6-tup corepressor complexes, which are involved in the repression of many genes in a wide variety of physiological processes. May also be involved in the derepression of at least some target genes. The complex is recruited to target genes by interaction with DNA-bound transcriptional repressors. The complex recruits histone deacetylases to produce a repressive chromatin structure, interacts with hypoacetylated N-terminal tails of histones H3 and H4 that have been programmed for repression by the action of histone deacetylases and interferes directly with the transcriptional machinery by associating with the RNA polymerase II mediator complex. The sequence is that of General transcriptional corepressor ssn6 (ssn6) from Schizosaccharomyces pombe (strain 972 / ATCC 24843) (Fission yeast).